An 800-amino-acid chain; its full sequence is Kolavenyl diphosphate synthase TPS5, chloroplastic (800 aa).

Residues 1 to 75 (MSLAYSQATS…VILTAEKSVD (75 aa)) constitute a chloroplast transit peptide. K244 is a binding site for substrate. Mg(2+) is bound by residues D375 and D377. The DXDD motif motif lies at 375 to 378 (DVDD). K461 contributes to the substrate binding site.

The protein belongs to the terpene synthase family. Requires Mg(2+) as cofactor. Mostly expressed in trichomes of leaves and fruits.

Its subcellular location is the plastid. The protein resides in the chloroplast. It catalyses the reaction (2E,6E,10E)-geranylgeranyl diphosphate = (+)-kolavenyl diphosphate. Its pathway is secondary metabolite biosynthesis; terpenoid biosynthesis. Involved in the biosynthesis of labdane-type diterpenoid including cleroda-dienols, and peregrinol lactones and furan derivatives, dopaminergic diterpenoids that can bind to dopamine receptors in the human pituitary gland, have probably ability to lower prolactin levels, and are used to treat menstrual cycle disorders (e.g. premenstrual syndrome and mastodynia). Terpene synthase that produces kolavenyl diphosphate from geranylgeranyl diphosphate (GGPP). The polypeptide is Kolavenyl diphosphate synthase TPS5, chloroplastic (Vitex agnus-castus (Chaste tree)).